A 273-amino-acid chain; its full sequence is 6-carboxyhexanoate--CoA ligase (273 aa).

The protein belongs to the BioW family. As to quaternary structure, homodimer. The cofactor is Mg(2+).

It carries out the reaction heptanedioate + ATP + CoA = 6-carboxyhexanoyl-CoA + AMP + diphosphate. It functions in the pathway metabolic intermediate metabolism; pimeloyl-CoA biosynthesis; pimeloyl-CoA from pimelate: step 1/1. Functionally, catalyzes the transformation of pimelate into pimeloyl-CoA with concomitant hydrolysis of ATP to AMP. The chain is 6-carboxyhexanoate--CoA ligase from Alkalihalophilus pseudofirmus (strain ATCC BAA-2126 / JCM 17055 / OF4) (Bacillus pseudofirmus).